A 291-amino-acid chain; its full sequence is Ribosomal protein L11 methyltransferase (291 aa).

Residues T136, G159, D181, and N228 each coordinate S-adenosyl-L-methionine.

Belongs to the methyltransferase superfamily. PrmA family.

Its subcellular location is the cytoplasm. The enzyme catalyses L-lysyl-[protein] + 3 S-adenosyl-L-methionine = N(6),N(6),N(6)-trimethyl-L-lysyl-[protein] + 3 S-adenosyl-L-homocysteine + 3 H(+). Functionally, methylates ribosomal protein L11. This Rhizobium meliloti (strain 1021) (Ensifer meliloti) protein is Ribosomal protein L11 methyltransferase.